Reading from the N-terminus, the 221-residue chain is Very-long-chain (3R)-3-hydroxyacyl-CoA dehydratase PASTICCINO 2 (221 aa).

The Cytoplasmic portion of the chain corresponds to 1–11 (MAGFLSVVRRV). The helical transmembrane segment at 12 to 32 (YLTLYNWIVFAGWAQVLYLAI) threads the bilayer. The Lumenal portion of the chain corresponds to 33-51 (TTLKETGYENVYDAIEKPL). A helical membrane pass occupies residues 52–70 (QLAQTAAVLEILHGLVGLV). Residues 71–76 (RSPVSA) lie on the Cytoplasmic side of the membrane. Residues 77 to 95 (TLPQIGSRLFLTWGILYSF) form a helical membrane-spanning segment. The Lumenal segment spans residues 96–100 (PEVRS). A helical transmembrane segment spans residues 101-122 (HFLVTSLVISWSITEIIRYSFF). Over 123–142 (GFKEALGFAPSWHLWLRYSS) the chain is Cytoplasmic. The chain crosses the membrane as a helical span at residues 143-165 (FLLLYPTGITSEVGLIYLALPHI). Active-site residues include tyrosine 147 and glutamate 154. Residues 166 to 184 (KTSEMYSVRMPNILNFSFD) lie on the Lumenal side of the membrane. Residues 185–204 (FFYATILVLAIYVPGSPHMY) traverse the membrane as a helical segment. The Cytoplasmic segment spans residues 205–221 (RYMLGQRKRALSKSKRE).

This sequence belongs to the very long-chain fatty acids dehydratase HACD family. In terms of assembly, interacts with CDKA-1; but only with the 'Tyr-15' phosphorylated protein. Interacts with PAS1. Part of the fatty acid elongase complex which contains a beta-ketoacyl-CoA synthase (KCS), a beta-ketoacyl-CoA reductase (KCR), a beta-hydroxyacyl-CoA dehydratase (HCD) and an enoyl-CoA reductase (ECR). In terms of tissue distribution, high expression in young seedlings, roots, root tips, flowers and young siliques. Lower levels in leaves and stems.

It localises to the endoplasmic reticulum membrane. It is found in the cytoplasm. The protein localises to the nucleus. The enzyme catalyses a very-long-chain (3R)-3-hydroxyacyl-CoA = a very-long-chain (2E)-enoyl-CoA + H2O. It functions in the pathway lipid metabolism; fatty acid biosynthesis. In terms of biological role, catalyzes the third of the four reactions of the long-chain fatty acids elongation cycle. This endoplasmic reticulum-bound enzymatic process, allows the addition of two carbons to the chain of long- and very long-chain fatty acids/VLCFAs per cycle. This enzyme catalyzes the dehydration of the 3-hydroxyacyl-CoA intermediate into trans-2,3-enoyl-CoA, within each cycle of fatty acid elongation. Thereby, it participates in the production of VLCFAs of different chain lengths that are involved in multiple biological processes as precursors of membrane lipids and lipid mediators. May be an anti-phosphatase that prevents CDKA-1 dephosphorylation and activation. Involved in the hormonal control of cell division and differentiation. Required for proliferation control of meristematic and non-meristematic cells. Negative regulator of the cell cycle. This is Very-long-chain (3R)-3-hydroxyacyl-CoA dehydratase PASTICCINO 2 (PAS2) from Arabidopsis thaliana (Mouse-ear cress).